The following is a 158-amino-acid chain: Protein FAM177B (158 aa).

Residues 36–48 (EYSTEEEEEEEKE) show a composition bias toward acidic residues. The disordered stretch occupies residues 36–59 (EYSTEEEEEEEKEEQSTNSTLDPS).

It belongs to the FAM177 family.

The protein is Protein FAM177B (FAM177B) of Homo sapiens (Human).